The chain runs to 193 residues: E3 ubiquitin-protein ligase RMA2 (193 aa).

The RING-type zinc finger occupies 21-75; sequence CNICLDQVRDPVVTLCGHLFCWPCIHKWTYASNNSRQRVDQYDHKREPPKCPVCK. Residues 175-192 form a helical; Anchor for type IV membrane protein membrane-spanning segment; sequence LSRVYLFLLCFMFMCLFL.

In terms of assembly, interacts with ERABP1. Barely detected in roots and limited to the root tips. Expressed in leaf hydathodes and in siliques.

The protein localises to the endoplasmic reticulum membrane. It catalyses the reaction S-ubiquitinyl-[E2 ubiquitin-conjugating enzyme]-L-cysteine + [acceptor protein]-L-lysine = [E2 ubiquitin-conjugating enzyme]-L-cysteine + N(6)-ubiquitinyl-[acceptor protein]-L-lysine.. The protein operates within protein modification; protein ubiquitination. E3 ubiquitin-protein ligase that promotes the ubiquitination and proteasomal degradation of the auxin-binding protein ERABP1. The chain is E3 ubiquitin-protein ligase RMA2 (RMA2) from Arabidopsis thaliana (Mouse-ear cress).